The primary structure comprises 480 residues: Alpha-glucosidase (480 aa).

An NAD(+)-binding site is contributed by 4–70; it reads VKIGIIGAGS…ADLKFEKTMN (67 aa). Aspartate 119 and asparagine 153 together coordinate substrate. A Mn(2+)-binding site is contributed by cysteine 174. Histidine 175 functions as the Proton donor in the catalytic mechanism. Mn(2+) is bound at residue histidine 203. Aspartate 260 functions as the Proton acceptor in the catalytic mechanism.

This sequence belongs to the glycosyl hydrolase 4 family. Homodimer. Requires NAD(+) as cofactor. Mn(2+) serves as cofactor. It depends on Co(2+) as a cofactor. Ni(2+) is required as a cofactor.

The catalysed reaction is Hydrolysis of terminal, non-reducing (1-&gt;4)-linked alpha-D-glucose residues with release of alpha-D-glucose.. With respect to regulation, inhibited by Hg(2+) ion and EDTA. Its function is as follows. Alpha-glycosidase with a very broad specificity. Hydrolyzes maltose and other small maltooligosaccharides but is inactive against the polymeric substrate starch. AglA is not specific with respect to the configuration at the C-4 position of its substrates because glycosidic derivatives of D-galactose are also hydrolyzed. Does not cleave beta-glycosidic bonds. The sequence is that of Alpha-glucosidase (aglA) from Thermotoga maritima (strain ATCC 43589 / DSM 3109 / JCM 10099 / NBRC 100826 / MSB8).